Consider the following 193-residue polypeptide: MSEWLMLLLGTALVNNVVLVKFLGLCPFMGVSKKVDSAIGMGMATTFVLTLASALTWLIEHFLLVPFDFGYLRILSFILVIAATVQFVEMVIKKTAPDLYKVLGIYLPLITTNCAVLGVALLNAGEGAGFVRSVLYGFGSALGFTMVMVLFAGLRERLALTSVPAAFSGAPISFITAGLLSLAFMGFAGLTNH.

6 consecutive transmembrane segments (helical) span residues 5–25 (LMLLLGTALVNNVVLVKFLGL), 39–59 (IGMGMATTFVLTLASALTWLI), 62–82 (FLLVPFDFGYLRILSFILVIA), 102–122 (VLGIYLPLITTNCAVLGVALL), 134–154 (VLYGFGSALGFTMVMVLFAGL), and 170–190 (APISFITAGLLSLAFMGFAGL).

This sequence belongs to the NqrDE/RnfAE family. In terms of assembly, the complex is composed of six subunits: RnfA, RnfB, RnfC, RnfD, RnfE and RnfG.

Its subcellular location is the cell inner membrane. Functionally, part of a membrane-bound complex that couples electron transfer with translocation of ions across the membrane. The polypeptide is Ion-translocating oxidoreductase complex subunit A (Azoarcus sp. (strain BH72)).